We begin with the raw amino-acid sequence, 548 residues long: Putative ATP-dependent RNA helicase R290 (548 aa).

Positions 38-206 constitute a Helicase ATP-binding domain; it reads INKVINGEDV…CKVLQLKTNE (169 aa). Residue 51-58 coordinates ATP; that stretch reads LMTSAGKS. Positions 150–153 match the DEAH box motif; the sequence is DEAH. Positions 231–376 constitute a Helicase C-terminal domain; sequence DIVPIINKYP…KTQLALLEQM (146 aa).

The protein belongs to the DEAD box helicase family. DEAH subfamily.

The enzyme catalyses ATP + H2O = ADP + phosphate + H(+). The sequence is that of Putative ATP-dependent RNA helicase R290 from Acanthamoeba polyphaga mimivirus (APMV).